Consider the following 102-residue polypeptide: Small ribosomal subunit protein uS10 (102 aa).

The protein belongs to the universal ribosomal protein uS10 family. As to quaternary structure, part of the 30S ribosomal subunit.

Functionally, involved in the binding of tRNA to the ribosomes. The protein is Small ribosomal subunit protein uS10 of Lactobacillus helveticus (strain DPC 4571).